A 462-amino-acid polypeptide reads, in one-letter code: Cysteine--tRNA ligase (462 aa).

Cys-29 is a Zn(2+) binding site. The 'HIGH' region signature appears at 31–41 (PTVYDHAHIGN). Cys-214, His-239, and Glu-243 together coordinate Zn(2+). A 'KMSKS' region motif is present at residues 272 to 276 (KMSKS). Residue Lys-275 coordinates ATP.

Belongs to the class-I aminoacyl-tRNA synthetase family. Monomer. Requires Zn(2+) as cofactor.

It is found in the cytoplasm. It carries out the reaction tRNA(Cys) + L-cysteine + ATP = L-cysteinyl-tRNA(Cys) + AMP + diphosphate. The polypeptide is Cysteine--tRNA ligase (Xanthobacter autotrophicus (strain ATCC BAA-1158 / Py2)).